Here is an 84-residue protein sequence, read N- to C-terminus: Cell division topological specificity factor (84 aa).

It belongs to the MinE family.

In terms of biological role, prevents the cell division inhibition by proteins MinC and MinD at internal division sites while permitting inhibition at polar sites. This ensures cell division at the proper site by restricting the formation of a division septum at the midpoint of the long axis of the cell. This chain is Cell division topological specificity factor, found in Pseudomonas fluorescens (strain Pf0-1).